The chain runs to 146 residues: Hemoglobin subunit beta (146 aa).

The region spanning 2–146 (QWSESERTII…VVSALGKQYH (145 aa)) is the Globin domain. The heme b site is built by H63 and H92.

The protein belongs to the globin family. In terms of assembly, heterotetramer of two alpha chains and two beta chains. In terms of tissue distribution, red blood cells.

Functionally, involved in oxygen transport from gills to the various peripheral tissues. This is Hemoglobin subunit beta (hbb) from Pogonophryne scotti (Saddleback plunderfish).